We begin with the raw amino-acid sequence, 156 residues long: Small ribosomal subunit protein uS7 (156 aa).

This sequence belongs to the universal ribosomal protein uS7 family. In terms of assembly, part of the 30S ribosomal subunit. Contacts proteins S9 and S11.

One of the primary rRNA binding proteins, it binds directly to 16S rRNA where it nucleates assembly of the head domain of the 30S subunit. Is located at the subunit interface close to the decoding center, probably blocks exit of the E-site tRNA. In Roseobacter denitrificans (strain ATCC 33942 / OCh 114) (Erythrobacter sp. (strain OCh 114)), this protein is Small ribosomal subunit protein uS7.